Consider the following 783-residue polypeptide: ATP-dependent zinc metalloprotease FtsH (783 aa).

The span at 1–16 shows a compositional bias: low complexity; that stretch reads MSETPNTNEQNNPNNQ. Positions 1–79 are disordered; sequence MSETPNTNEQ…DKEEDFASRL (79 aa). Residues 1–86 are Cytoplasmic-facing; the sequence is MSETPNTNEQ…SRLNTRPPQR (86 aa). Residues 35-61 show a composition bias toward basic and acidic residues; it reads MPERPERHNQADGAPKRPGDDDRKSER. Residues 87–107 form a helical membrane-spanning segment; the sequence is ASIITIIIIFLVAFFIGSQMM. The Extracellular portion of the chain corresponds to 108 to 233; the sequence is NMVHGEETDD…EYQVTLPSNV (126 aa). Residues 234-254 form a helical membrane-spanning segment; it reads TEILISVLPMLLFAGLLIYFF. Residues 255 to 783 lie on the Cytoplasmic side of the membrane; that stretch reads SQMSKANNSQ…APQPPAAPQQ (529 aa). 325-332 provides a ligand contact to ATP; it reads GPPGTGKT. Position 547 (His547) interacts with Zn(2+). Glu548 is an active-site residue. Positions 551 and 623 each coordinate Zn(2+). A compositionally biased stretch (low complexity) spans 738-771; that stretch reads EAAAKAADQAEQPQVEAEPVAQVATPAAPVAPAV. The tract at residues 738–783 is disordered; sequence EAAAKAADQAEQPQVEAEPVAQVATPAAPVAPAVPEAPQPPAAPQQ. The segment covering 772–783 has biased composition (pro residues); sequence PEAPQPPAAPQQ.

It in the central section; belongs to the AAA ATPase family. In the C-terminal section; belongs to the peptidase M41 family. Homohexamer. Zn(2+) serves as cofactor.

The protein resides in the cell membrane. In terms of biological role, acts as a processive, ATP-dependent zinc metallopeptidase for both cytoplasmic and membrane proteins. Plays a role in the quality control of integral membrane proteins. This chain is ATP-dependent zinc metalloprotease FtsH, found in Slackia heliotrinireducens (strain ATCC 29202 / DSM 20476 / NCTC 11029 / RHS 1) (Peptococcus heliotrinreducens).